Reading from the N-terminus, the 351-residue chain is Probable dual-specificity RNA methyltransferase RlmN (351 aa).

The active-site Proton acceptor is glutamate 102. In terms of domain architecture, Radical SAM core spans 110 to 339 (DGGRKTICIS…ILNRRSPGKD (230 aa)). Cysteine 117 and cysteine 344 are joined by a disulfide. Positions 124, 128, and 131 each coordinate [4Fe-4S] cluster. S-adenosyl-L-methionine contacts are provided by residues 171–172 (GE), serine 203, 226–228 (SLN), and asparagine 302. Cysteine 344 serves as the catalytic S-methylcysteine intermediate.

Belongs to the radical SAM superfamily. RlmN family. Requires [4Fe-4S] cluster as cofactor.

The protein localises to the cytoplasm. It catalyses the reaction adenosine(2503) in 23S rRNA + 2 reduced [2Fe-2S]-[ferredoxin] + 2 S-adenosyl-L-methionine = 2-methyladenosine(2503) in 23S rRNA + 5'-deoxyadenosine + L-methionine + 2 oxidized [2Fe-2S]-[ferredoxin] + S-adenosyl-L-homocysteine. The enzyme catalyses adenosine(37) in tRNA + 2 reduced [2Fe-2S]-[ferredoxin] + 2 S-adenosyl-L-methionine = 2-methyladenosine(37) in tRNA + 5'-deoxyadenosine + L-methionine + 2 oxidized [2Fe-2S]-[ferredoxin] + S-adenosyl-L-homocysteine. Its function is as follows. Specifically methylates position 2 of adenine 2503 in 23S rRNA and position 2 of adenine 37 in tRNAs. This Leptospira borgpetersenii serovar Hardjo-bovis (strain JB197) protein is Probable dual-specificity RNA methyltransferase RlmN.